Consider the following 208-residue polypeptide: Thymidylate kinase (208 aa).

10–17 (GPEGSGKT) provides a ligand contact to ATP.

Belongs to the thymidylate kinase family.

The catalysed reaction is dTMP + ATP = dTDP + ADP. Phosphorylation of dTMP to form dTDP in both de novo and salvage pathways of dTTP synthesis. In Bacillus cereus (strain B4264), this protein is Thymidylate kinase.